The chain runs to 588 residues: Ankyrin repeat and SOCS box protein 15 (588 aa).

ANK repeat units follow at residues 75–104 (KGWFPLHEAVVQPIQQILEVVLDASYKTLW), 110–139 (DGETPLTLAVKAGLVENVRTLLEKGVWPNT), 143–172 (KGETPLLLAIKRGSYDMVSALLKHNTSLDQ), 176–205 (KRWSAMHEAAKQGHKDIIALLLNNGGNVHL), 209–238 (FGVTPLGVAAEYGHCDVLEHLIHKGGDVLA), 242–271 (DGASVLFEAAGGGNPDCISLLLEYGGSGNI), 275–304 (AGHLPIHRAAYEGHYLALKYLIPVTSKHAI), 307–336 (SGLTPIHSAADGQNAQCLELLIENGFDVNS), 349–378 (ERKTALYFAVCNNDILCTEILLAAGADPNL), 379–408 (DPLNCLLVAVRANNHEIVRLLLAHGANVNC), and 416–444 (TRFPSAIQYALNDEVMLRLLLNNGYQVEM). The SOCS box domain maps to 524-579 (WPEIRQILENPCSLKHLCRLKIRRLMGLQRLCQPTLMEKLSLPPTIQRYILFKEYD).

The protein belongs to the ankyrin SOCS box (ASB) family.

Its pathway is protein modification; protein ubiquitination. Functionally, may be a substrate-recognition component of a SCF-like ECS (Elongin-Cullin-SOCS-box protein) E3 ubiquitin-protein ligase complex which mediates the ubiquitination and subsequent proteasomal degradation of target proteins. The chain is Ankyrin repeat and SOCS box protein 15 (ASB15) from Bos taurus (Bovine).